A 385-amino-acid polypeptide reads, in one-letter code: UPF0496 protein At3g28290 (385 aa).

Residues 138-214 (KDKENDVGKK…IEMEISSRKK (77 aa)) are a coiled coil. A run of 2 helical transmembrane segments spans residues 217 to 237 (IISN…SMVL) and 242 to 262 (VGAG…IGWV). Positions 267 to 294 (ILENKIQAREKQEEALKKAHRIANEMDK) form a coiled coil.

Belongs to the UPF0496 family. As to expression, widely expressed.

The protein resides in the membrane. The chain is UPF0496 protein At3g28290 from Arabidopsis thaliana (Mouse-ear cress).